Consider the following 34-residue polypeptide: Hemopexin (34 aa).

A disordered region spans residues 1–25; that stretch reads RPLTQHKPHTPGDEHPHGAEPPGXD.

The protein belongs to the hemopexin family. In terms of tissue distribution, expressed by the liver and secreted in plasma.

The protein localises to the secreted. In terms of biological role, binds heme and transports it to the liver for breakdown and iron recovery, after which the free hemopexin returns to the circulation. The protein is Hemopexin (HPX) of Gallus gallus (Chicken).